Consider the following 242-residue polypeptide: UPF0157 protein PA4798 (242 aa).

The tract at residues 215 to 242 (AGAESTPGGPADTAYFESLRSRVSKPQD) is disordered.

This sequence belongs to the UPF0157 (GrpB) family.

In Pseudomonas aeruginosa (strain ATCC 15692 / DSM 22644 / CIP 104116 / JCM 14847 / LMG 12228 / 1C / PRS 101 / PAO1), this protein is UPF0157 protein PA4798.